We begin with the raw amino-acid sequence, 161 residues long: Endoribonuclease YbeY (161 aa).

3 residues coordinate Zn(2+): histidine 121, histidine 125, and histidine 131.

It belongs to the endoribonuclease YbeY family. Zn(2+) is required as a cofactor.

The protein resides in the cytoplasm. Its function is as follows. Single strand-specific metallo-endoribonuclease involved in late-stage 70S ribosome quality control and in maturation of the 3' terminus of the 16S rRNA. The polypeptide is Endoribonuclease YbeY (Stenotrophomonas maltophilia (strain R551-3)).